The following is a 481-amino-acid chain: Abl interactor 1 (481 aa).

Position 2 is an N-acetylalanine (A2). Residues 18-79 (ALIESYQNLT…NNVLQLLDIQ (62 aa)) form a required for binding to WASF1 region. A t-SNARE coiled-coil homology domain is found at 45-107 (KALEETKAYT…DIHKEKVARR (63 aa)). Position 53 is a phosphotyrosine (Y53). A disordered region spans residues 158–285 (AKHGNNQPAR…PGAAPGSQYG (128 aa)). The span at 161 to 175 (GNNQPARTGTLSRTN) shows a compositional bias: polar residues. Phosphothreonine occurs at positions 174 and 178. S183 and S187 each carry phosphoserine. At Y213 the chain carries Phosphotyrosine. Phosphothreonine is present on T215. Residues S216, S222, and S225 each carry the phosphoserine modification. Residues 222–235 (SQHSPGRTASLNQR) show a composition bias toward polar residues. Composition is skewed to low complexity over residues 248–258 (SRENSGSSSIG) and 272–282 (GPAAPGAAPGS). Phosphoserine is present on residues S292 and S296. Disordered regions lie at residues 318-348 (AQPH…LTPQ) and 361-392 (NIAD…PPPV). Composition is skewed to pro residues over residues 366 to 376 (PTPPPPPPPDD) and 383 to 392 (SPPPPPPPPV). Residues 419–478 (NYIEKVVAIYDYTKDKDDELSFKEGAIIYVIKKNDDGWFEGVCNRVTGLFPGNYVESIMH) enclose the SH3 domain. Y428 carries the post-translational modification Phosphotyrosine. The residue at position 439 (S439) is a Phosphoserine. T480 carries the post-translational modification Phosphothreonine.

It belongs to the ABI family. As to quaternary structure, interacts with ENAH, Abelson murine leukemia virus V-ABL, ABL1, STX1A, SNAP25, VAMP2, and through its N-terminus with WASF1. Part of a complex consisting of ABI1, STX1A and SNAP25. Part of a complex consisting of ABI1, EPS8 and SOS1. Interacts with EPS8, SOS1, SOS2, GRB2, SPTA1, and the first SH3 domain of NCK1. Component of the WAVE2 complex composed of ABI1, CYFIP1/SRA1, NCKAP1/NAP1 (NCKAP1l/HEM1 in hematopoietic cells) and WASF2/WAVE2. Interacts (via SH3 domain) with SHANK2 and SHANK3, but not SHANK1; the interaction is direct. Interacts with the heterodimer MYC:MAX; the interaction may enhance MYC:MAX transcriptional activity. Interacts with FNBP1L (via the SH3 domain), WASF2, and CDC42, but only in the presence of FNBP1L. In terms of processing, phosphorylated on tyrosine residues after serum stimulation or induction by v-Abl. Seems to be phosphorylated at Tyr-53 by ABL1, required for nuclear but not for synaptic localization. As to expression, widely expressed with highest levels in bone marrow, spleen, brain, testes, and embryonic brain. In adult brain prominently expressed in the neocortex, hippocampus and dentate gyrus.

Its subcellular location is the cytoplasm. The protein localises to the nucleus. The protein resides in the cell projection. It is found in the lamellipodium. It localises to the filopodium. Its subcellular location is the growth cone. The protein localises to the postsynaptic density. The protein resides in the cytoskeleton. Functionally, may act in negative regulation of cell growth and transformation by interacting with nonreceptor tyrosine kinases ABL1 and/or ABL2. In vitro, at least isoform 2 and isoform 4 suppress the transforming activity of Abelson murine leukemia virus (v-Abl) after overexpression in fibroblasts. May play a role in regulation EGF-induced Erk pathway activation. Involved in cytoskeletal reorganization and EGFR signaling. Together with EPS8 participates in transduction of signals from Ras to Rac. In vitro, a trimeric complex of ABI1, EPS8 and SOS1 exhibits Rac specific guanine nucleotide exchange factor (GEF) activity and ABI1 seems to act as an adapter in the complex. Regulates ABL1/c-Abl-mediated phosphorylation of ENAH. Recruits WASF1 to lamellipodia and there seems to regulate WASF1 protein level. In brain, seems to regulate the dendritic outgrowth and branching as well as to determine the shape and number of synaptic contacts of developing neurons. The chain is Abl interactor 1 from Mus musculus (Mouse).